Here is a 525-residue protein sequence, read N- to C-terminus: uncharacterized protein (525 aa).

Positions 21–48 (CLICRSMRKKCDEVHPQCGRCLKAGKQC) form a DNA-binding region, zn(2)-C6 fungal-type.

It localises to the cytoplasm. The protein resides in the nucleus. This is an uncharacterized protein from Schizosaccharomyces pombe (strain 972 / ATCC 24843) (Fission yeast).